Here is a 469-residue protein sequence, read N- to C-terminus: Neuraminidase (469 aa).

The Intravirion segment spans residues 1-6; the sequence is MNTNQR. The chain crosses the membrane as a helical span at residues 7-27; the sequence is IITIGTICLIVGIISLLLQIG. The interval 11-33 is involved in apical transport and lipid raft association; it reads GTICLIVGIISLLLQIGNIISLW. Topologically, residues 28–469 are virion surface; sequence NIISLWISHS…GADLPFTIDK (442 aa). Residues 36–90 are hypervariable stalk region; sequence HSIQTREKNHPEVCNQSVITYENNTWVNQTYVNISNANIVAGQGVTSIILAGNSP. 4 N-linked (GlcNAc...) asparagine; by host glycosylation sites follow: Asn50, Asn58, Asn63, and Asn68. The tract at residues 91–469 is head of neuraminidase; the sequence is LCPISGWAIY…GADLPFTIDK (379 aa). Intrachain disulfides connect Cys92–Cys417, Cys124–Cys129, Cys184–Cys231, Cys233–Cys238, Cys279–Cys292, Cys281–Cys290, Cys318–Cys335, and Cys421–Cys446. Arg118 is a binding site for substrate. Asn146 is a glycosylation site (N-linked (GlcNAc...) asparagine; by host). The active-site Proton donor/acceptor is Asp151. Arg152 is a binding site for substrate. N-linked (GlcNAc...) asparagine; by host glycosylation occurs at Asn235. 277–278 contacts substrate; that stretch reads EE. Residue Arg293 participates in substrate binding. Ca(2+)-binding residues include Asp294, Asp324, and Asn344. A substrate-binding site is contributed by Arg368. Catalysis depends on Tyr402, which acts as the Nucleophile. N-linked (GlcNAc...) asparagine; by host glycosylation is present at Asn454.

This sequence belongs to the glycosyl hydrolase 34 family. In terms of assembly, homotetramer. Ca(2+) is required as a cofactor. In terms of processing, N-glycosylated.

The protein localises to the virion membrane. The protein resides in the host apical cell membrane. The catalysed reaction is Hydrolysis of alpha-(2-&gt;3)-, alpha-(2-&gt;6)-, alpha-(2-&gt;8)- glycosidic linkages of terminal sialic acid residues in oligosaccharides, glycoproteins, glycolipids, colominic acid and synthetic substrates.. Its activity is regulated as follows. Inhibited by the neuraminidase inhibitors zanamivir (Relenza) and oseltamivir (Tamiflu). These drugs interfere with the release of progeny virus from infected cells and are effective against all influenza strains. Resistance to neuraminidase inhibitors is quite rare. Functionally, catalyzes the removal of terminal sialic acid residues from viral and cellular glycoconjugates. Cleaves off the terminal sialic acids on the glycosylated HA during virus budding to facilitate virus release. Additionally helps virus spread through the circulation by further removing sialic acids from the cell surface. These cleavages prevent self-aggregation and ensure the efficient spread of the progeny virus from cell to cell. Otherwise, infection would be limited to one round of replication. Described as a receptor-destroying enzyme because it cleaves a terminal sialic acid from the cellular receptors. May facilitate viral invasion of the upper airways by cleaving the sialic acid moieties on the mucin of the airway epithelial cells. Likely to plays a role in the budding process through its association with lipid rafts during intracellular transport. May additionally display a raft-association independent effect on budding. Plays a role in the determination of host range restriction on replication and virulence. Sialidase activity in late endosome/lysosome traffic seems to enhance virus replication. The sequence is that of Neuraminidase from Influenza A virus (strain A/Swine/Wisconsin/1/1967 H1N1).